The following is a 103-amino-acid chain: Small ribosomal subunit protein uS10 (103 aa).

Belongs to the universal ribosomal protein uS10 family. In terms of assembly, part of the 30S ribosomal subunit.

Its function is as follows. Involved in the binding of tRNA to the ribosomes. The protein is Small ribosomal subunit protein uS10 of Cutibacterium acnes (strain DSM 16379 / KPA171202) (Propionibacterium acnes).